A 389-amino-acid polypeptide reads, in one-letter code: Chalcone synthase 4-1 (389 aa).

Cys164 is an active-site residue.

This sequence belongs to the thiolase-like superfamily. Chalcone/stilbene synthases family.

The catalysed reaction is (E)-4-coumaroyl-CoA + 3 malonyl-CoA + 3 H(+) = 2',4,4',6'-tetrahydroxychalcone + 3 CO2 + 4 CoA. The protein operates within secondary metabolite biosynthesis; flavonoid biosynthesis. The primary product of this enzyme is 4,2',4',6'-tetrahydroxychalcone (also termed naringenin-chalcone or chalcone) which can under specific conditions spontaneously isomerize into naringenin. The protein is Chalcone synthase 4-1 (CHS4-1) of Medicago sativa (Alfalfa).